Here is a 452-residue protein sequence, read N- to C-terminus: Phosphoglucosamine mutase (452 aa).

Serine 101 functions as the Phosphoserine intermediate in the catalytic mechanism. Residues serine 101, aspartate 241, aspartate 243, and aspartate 245 each coordinate Mg(2+). At serine 101 the chain carries Phosphoserine.

It belongs to the phosphohexose mutase family. Mg(2+) serves as cofactor. In terms of processing, activated by phosphorylation.

The enzyme catalyses alpha-D-glucosamine 1-phosphate = D-glucosamine 6-phosphate. Its function is as follows. Catalyzes the conversion of glucosamine-6-phosphate to glucosamine-1-phosphate. This is Phosphoglucosamine mutase from Lactococcus lactis subsp. cremoris (strain MG1363).